A 357-amino-acid polypeptide reads, in one-letter code: S-adenosylmethionine:tRNA ribosyltransferase-isomerase (357 aa).

Belongs to the QueA family. As to quaternary structure, monomer.

It localises to the cytoplasm. It carries out the reaction 7-aminomethyl-7-carbaguanosine(34) in tRNA + S-adenosyl-L-methionine = epoxyqueuosine(34) in tRNA + adenine + L-methionine + 2 H(+). It functions in the pathway tRNA modification; tRNA-queuosine biosynthesis. Functionally, transfers and isomerizes the ribose moiety from AdoMet to the 7-aminomethyl group of 7-deazaguanine (preQ1-tRNA) to give epoxyqueuosine (oQ-tRNA). This chain is S-adenosylmethionine:tRNA ribosyltransferase-isomerase, found in Hamiltonella defensa subsp. Acyrthosiphon pisum (strain 5AT).